The sequence spans 63 residues: Large ribosomal subunit protein uL29 (63 aa).

Belongs to the universal ribosomal protein uL29 family.

This is Large ribosomal subunit protein uL29 from Pelagibacter ubique (strain HTCC1062).